Reading from the N-terminus, the 339-residue chain is Cyclin-Y-like protein 1 (339 aa).

The Cyclin N-terminal domain occupies 181-263 (QLTAECAIVT…FLELLQFNIN (83 aa)).

It belongs to the cyclin family. Cyclin Y subfamily.

Its subcellular location is the cell membrane. Its function is as follows. Key regulator of Wnt signaling implicated in various biological processes such as embryonic neurogenesis. The chain is Cyclin-Y-like protein 1 (ccnyl1) from Danio rerio (Zebrafish).